A 313-amino-acid chain; its full sequence is tRNA uridine(34) hydroxylase (313 aa).

Residues 127 to 225 (SDPDTILIDT…YLETVPEEES (99 aa)) enclose the Rhodanese domain. The Cysteine persulfide intermediate role is filled by Cys-185.

The protein belongs to the TrhO family.

The enzyme catalyses uridine(34) in tRNA + AH2 + O2 = 5-hydroxyuridine(34) in tRNA + A + H2O. Catalyzes oxygen-dependent 5-hydroxyuridine (ho5U) modification at position 34 in tRNAs. The chain is tRNA uridine(34) hydroxylase from Gluconobacter oxydans (strain 621H) (Gluconobacter suboxydans).